A 155-amino-acid polypeptide reads, in one-letter code: Small ribosomal subunit protein uS7c (155 aa).

It belongs to the universal ribosomal protein uS7 family. In terms of assembly, part of the 30S ribosomal subunit.

It is found in the plastid. The protein localises to the chloroplast. Its function is as follows. One of the primary rRNA binding proteins, it binds directly to 16S rRNA where it nucleates assembly of the head domain of the 30S subunit. This Spirogyra maxima (Green alga) protein is Small ribosomal subunit protein uS7c (rps7).